We begin with the raw amino-acid sequence, 585 residues long: Cytidine monophosphate-N-acetylneuraminic acid hydroxylase (585 aa).

The region spanning 9 to 107 is the Rieske domain; sequence LSPVEVANLK…VEMDENNRLL (99 aa). [2Fe-2S] cluster contacts are provided by Cys49, His51, Cys70, and His73.

Belongs to the CMP-Neu5Ac hydroxylase family. [2Fe-2S] cluster is required as a cofactor.

The protein localises to the cytoplasm. The enzyme catalyses CMP-N-acetyl-beta-neuraminate + 2 Fe(II)-[cytochrome b5] + O2 + 2 H(+) = CMP-N-glycoloyl-beta-neuraminate + 2 Fe(III)-[cytochrome b5] + H2O. It functions in the pathway amino-sugar metabolism; N-acetylneuraminate metabolism. Functionally, sialic acids are components of carbohydrate chains of glycoconjugates and are involved in cell-cell recognition and cell-pathogen interactions. Catalyzes the conversion of CMP-N-acetylneuraminic acid (CMP-Neu5Ac) into its hydroxylated derivative CMP-N-glycolylneuraminic acid (CMP-Neu5Gc), a sialic acid abundantly expressed at the surface of many cells. This Pongo pygmaeus (Bornean orangutan) protein is Cytidine monophosphate-N-acetylneuraminic acid hydroxylase (CMAH).